A 292-amino-acid chain; its full sequence is Probable starch degradation products transport system permease protein AmyD (292 aa).

6 helical membrane passes run 15 to 35, 77 to 97, 110 to 130, 156 to 176, 205 to 225, and 260 to 280; these read WLFIAPTLLSLIIVVLIPFII, FAVACIVIINVVGLSLAMLVT, FYLPNLIGGLILGFIWNFIFV, FWGLVIVTSWQMIGYVMVIYI, VFPLIAPAFTVSLFITLSNSF, and MAVGQAKAVIMFLIIAVISVI. The ABC transmembrane type-1 domain maps to 71-281; that stretch reads IIFTAKFAVA…LIIAVISVIQ (211 aa).

This sequence belongs to the binding-protein-dependent transport system permease family. MalFG subfamily.

The protein localises to the cell membrane. Functionally, probably part of a binding-protein-dependent transport system starch degradation products. Probably responsible for the translocation of the substrate across the membrane. In Thermoanaerobacterium thermosulfurigenes (Clostridium thermosulfurogenes), this protein is Probable starch degradation products transport system permease protein AmyD (amyD).